A 225-amino-acid chain; its full sequence is 7-cyano-7-deazaguanine synthase (225 aa).

Position 10–20 (10–20 (LSGGIDSATAA)) interacts with ATP. Zn(2+) is bound by residues Cys191, Cys199, Cys202, and Cys205.

Belongs to the QueC family. The cofactor is Zn(2+).

It carries out the reaction 7-carboxy-7-deazaguanine + NH4(+) + ATP = 7-cyano-7-deazaguanine + ADP + phosphate + H2O + H(+). Its pathway is purine metabolism; 7-cyano-7-deazaguanine biosynthesis. Catalyzes the ATP-dependent conversion of 7-carboxy-7-deazaguanine (CDG) to 7-cyano-7-deazaguanine (preQ(0)). This is 7-cyano-7-deazaguanine synthase from Prochlorococcus marinus (strain NATL1A).